Here is a 251-residue protein sequence, read N- to C-terminus: UstYa family oxidase phomYb (251 aa).

Positions 1–47 (MDGYSSKKPRSASPSRSSLTEVEEEERDTLLKTVSLEEEDKSGENGP) are disordered. Residues 58-78 (AIGILMLSNIAFIAAFLTVFV) traverse the membrane as a helical segment. An N-linked (GlcNAc...) asparagine glycan is attached at Asn135. 2 short sequence motifs (HXXHC) span residues 160 to 164 (HQLHC) and 187 to 191 (HVSHC).

The protein belongs to the ustYa family.

Its subcellular location is the membrane. It functions in the pathway mycotoxin biosynthesis. Its function is as follows. UstYa family oxidase; part of the gene cluster that mediates the biosynthesis of the phomopsins, a group of hexapeptide mycotoxins which infects lupins and causes lupinosis disease in livestock. Within the pathway, phomYb is probably involved in the construction of the macrocyclic structure of the phomopsins. The pathway starts with the processing of the precursor phomA by several endopeptidases including kexin proteases as well as the cluster-specific S41 family peptidase phomP1 and the oligopeptidase phomG to produce 10 identical copies of the hexapeptide Tyr-Val-Ile-Pro-Ile-Asp. After being excised from the precursor peptide, the core peptides are cyclized and modified post-translationally by enzymes encoded within the gene cluster. The timing and order of proteolysis of the phomA precursor and PTMs are still unknown. Two tyrosinase-like enzymes, phomQ1 and phomQ2, catalyze the chlorination and hydroxylation of Tyr, respectively. PhomYb, is proposed to be involved in the construction of the macrocyclic structure. The other 4 ustYa family proteins may be involved in PTMs that generate the unique structure of phomopsin A. PhomYa is required for the hydroxylation of C-beta of Tyr. PhomYc, phomYd, and phomYe are responsible for the biosynthesis of 2,3-dehydroisoleucine (dIle), 2,3-dehydroaspartic acid (dAsp), and 3,4-dehydroproline (dPro), respectively. While dIle formation by phomYc is indispensable for the installation of dAsp by phomYd, the order of the other PTMs have not been elucidated yet. Most of the biosynthetic enzymes likely have broad substrate specificity, and thus, there might be a metabolic grid from a precursor to phomopsin A. The enzyme(s) responsible for the biosynthesis of 3,4-dehydrovaline (dVal) have also not been identified yet. Finally, phomM acts as an S-adenosylmethionine-dependent alpha-N-methyltransferase that catalyzes two successive N-methylation reactions, converting N-desmethyl-phomopsin A to phomopsin A and phomopsin A further to an N,N-dimethylated congener called phomopsin E. In Diaporthe leptostromiformis (Lupinosis disease fungus), this protein is UstYa family oxidase phomYb.